The primary structure comprises 397 residues: 8-amino-7-oxononanoate synthase (397 aa).

Substrate is bound at residue Arg23. 110–111 provides a ligand contact to pyridoxal 5'-phosphate; that stretch reads GY. Substrate is bound at residue His135. 3 residues coordinate pyridoxal 5'-phosphate: Ser181, His209, and Thr237. Lys240 carries the N6-(pyridoxal phosphate)lysine modification. A substrate-binding site is contributed by Thr354.

This sequence belongs to the class-II pyridoxal-phosphate-dependent aminotransferase family. BioF subfamily. In terms of assembly, homodimer. It depends on pyridoxal 5'-phosphate as a cofactor.

The enzyme catalyses 6-carboxyhexanoyl-[ACP] + L-alanine + H(+) = (8S)-8-amino-7-oxononanoate + holo-[ACP] + CO2. It functions in the pathway cofactor biosynthesis; biotin biosynthesis. Catalyzes the decarboxylative condensation of pimeloyl-[acyl-carrier protein] and L-alanine to produce 8-amino-7-oxononanoate (AON), [acyl-carrier protein], and carbon dioxide. In Anaeromyxobacter dehalogenans (strain 2CP-C), this protein is 8-amino-7-oxononanoate synthase.